We begin with the raw amino-acid sequence, 231 residues long: MQQYIIYLYTFLTIFGFWLALQISKRWKSMIFNTFVLTVLILAAILVIGKIPYDDYMAGNAPINNLLGLSIVALALPLYEQLRQIARQWKIILSTVVIASFLAMLSGGLLALLLGSTPEMVATVLPKSITMPIAMEVSRHLGGIPAVTAVGVVVAGLQGSIFGYLVLKKLGVKHQEAIGLSVGSVSHALGTVSCMETNPTAGSYSSISLVLCGIISSILAPFVFKLIYFFV.

6 consecutive transmembrane segments (helical) span residues 4 to 24 (YIIY…LQIS), 29 to 49 (SMIF…LVIG), 58 to 78 (AGNA…ALPL), 95 to 115 (TVVI…LLLG), 147 to 167 (VTAV…YLVL), and 211 to 231 (LCGI…YFFV).

It belongs to the YohK (E.coli)/YwbG (IPA-22R) (B.subtilis) family.

The protein resides in the cell membrane. This is an uncharacterized protein from Haemophilus influenzae (strain ATCC 51907 / DSM 11121 / KW20 / Rd).